We begin with the raw amino-acid sequence, 204 residues long: uncharacterized protein (204 aa).

The N-terminal stretch at methionine 1 to alanine 24 is a signal peptide.

This is an uncharacterized protein from Pasteurella multocida (strain Pm70).